A 789-amino-acid chain; its full sequence is SH3 domain-containing protein 19 (789 aa).

3 disordered regions span residues 24–170 (TNTE…PPRL), 209–404 (DDDV…RPKP), and 472–497 (TPLDERPRGRPNDSGHSQKPVDSGAP). The residue at position 65 (Ser65) is a Phosphoserine. Positions 296-305 (SHSDRTRNPE) are enriched in basic and acidic residues. A compositionally biased stretch (pro residues) spans 335–351 (WRPPPKGAPERPPPPKL). Low complexity predominate over residues 352–361 (PASKSSNKNL). Ser368 carries the phosphoserine modification. SH3 domains lie at 414–476 (LSVP…PLDE), 494–553 (SGAP…VIVD), 570–629 (AKGP…LVGD), 660–719 (PPGE…PCPA), and 729–788 (PKGR…FLQV). Residues 474-484 (LDERPRGRPND) are compositionally biased toward basic and acidic residues. Residues 635–663 (ANILSTKVPPKTKNEDPGSNSQDSSPPGE) are disordered.

In terms of assembly, interacts with ADAM12. Isoform 2 (but not isoform 1) interacts with ADAM9, ADAM10, ADAM15 and ADAM17. Interacts with SH3GL1 SH3 domain. Interacts via SH3 3 and SH3 4 or SH3 4 and SH3 5 domains with SOS2. Probably forms a trimeric complex with SH3GL1 and SOS2. Interacts with SH3YL1. In terms of tissue distribution, expressed in hair follicles.

The protein resides in the cytoplasm. Functionally, may play a role in regulating A disintegrin and metalloproteases (ADAMs) in the signaling of EGFR-ligand shedding. May be involved in suppression of Ras-induced cellular transformation and Ras-mediated activation of ELK1. Plays a role in the regulation of cell morphology and cytoskeletal organization. This Mus musculus (Mouse) protein is SH3 domain-containing protein 19 (Sh3d19).